A 394-amino-acid polypeptide reads, in one-letter code: 1-deoxy-D-xylulose 5-phosphate reductoisomerase (394 aa).

T12, G13, S14, I15, G38, and N126 together coordinate NADPH. K127 contributes to the 1-deoxy-D-xylulose 5-phosphate binding site. NADPH is bound at residue E128. A Mn(2+)-binding site is contributed by D151. 1-deoxy-D-xylulose 5-phosphate-binding residues include S152, E153, S177, and H200. E153 contacts Mn(2+). G206 lines the NADPH pocket. The 1-deoxy-D-xylulose 5-phosphate site is built by S213, N218, K219, and E222. E222 is a binding site for Mn(2+).

It belongs to the DXR family. The cofactor is Mg(2+). It depends on Mn(2+) as a cofactor.

The catalysed reaction is 2-C-methyl-D-erythritol 4-phosphate + NADP(+) = 1-deoxy-D-xylulose 5-phosphate + NADPH + H(+). Its pathway is isoprenoid biosynthesis; isopentenyl diphosphate biosynthesis via DXP pathway; isopentenyl diphosphate from 1-deoxy-D-xylulose 5-phosphate: step 1/6. Functionally, catalyzes the NADPH-dependent rearrangement and reduction of 1-deoxy-D-xylulose-5-phosphate (DXP) to 2-C-methyl-D-erythritol 4-phosphate (MEP). The polypeptide is 1-deoxy-D-xylulose 5-phosphate reductoisomerase (Beutenbergia cavernae (strain ATCC BAA-8 / DSM 12333 / CCUG 43141 / JCM 11478 / NBRC 16432 / NCIMB 13614 / HKI 0122)).